Here is an 842-residue protein sequence, read N- to C-terminus: Elongation factor 2 (842 aa).

A tr-type G domain is found at Ala17–Val346. GTP-binding positions include Ala26 to Ser33, Asn158 to Asp161, and Ser213 to Leu215. His699 is subject to Diphthamide.

It belongs to the TRAFAC class translation factor GTPase superfamily. Classic translation factor GTPase family. EF-G/EF-2 subfamily.

It is found in the cytoplasm. It carries out the reaction GTP + H2O = GDP + phosphate + H(+). The protein operates within protein biosynthesis; polypeptide chain elongation. In terms of biological role, catalyzes the GTP-dependent ribosomal translocation step during translation elongation. During this step, the ribosome changes from the pre-translocational (PRE) to the post-translocational (POST) state as the newly formed A-site-bound peptidyl-tRNA and P-site-bound deacylated tRNA move to the P and E sites, respectively. Catalyzes the coordinated movement of the two tRNA molecules, the mRNA and conformational changes in the ribosome. This chain is Elongation factor 2 (EFT2), found in Meyerozyma guilliermondii (strain ATCC 6260 / CBS 566 / DSM 6381 / JCM 1539 / NBRC 10279 / NRRL Y-324) (Yeast).